A 327-amino-acid polypeptide reads, in one-letter code: Fe-S cluster assembly protein DRE2 (327 aa).

The span at 1 to 14 (MSPATVTIDTTPDF) shows a compositional bias: polar residues. Disordered regions lie at residues 1-20 (MSPATVTIDTTPDFSNGGAP) and 153-179 (NKGEGGGPVQSPAAATQPTAPAPAAAA). Residues 17–144 (GGAPHSTLLL…EKPAEEVAAV (128 aa)) are N-terminal SAM-like domain. The interval 145 to 214 (PLKFLKKKNK…EDELMTEEDL (70 aa)) is linker. Positions 164–179 (PAAATQPTAPAPAAAA) are enriched in low complexity. Positions 224, 235, 238, and 240 each coordinate [2Fe-2S] cluster. A fe-S binding site A region spans residues 224–240 (CAPKPGKKRRACKDCTC). Positions 290, 293, 301, and 304 each coordinate [4Fe-4S] cluster. 2 consecutive short sequence motifs (cx2C motif) follow at residues 290 to 293 (CGSC) and 301 to 304 (CADC). Residues 290 to 304 (CGSCALGDAFRCADC) form a fe-S binding site B region.

The protein belongs to the anamorsin family. In terms of assembly, monomer. Interacts with TAH18. Interacts with MIA40. [2Fe-2S] cluster is required as a cofactor. [4Fe-4S] cluster serves as cofactor.

Its subcellular location is the cytoplasm. It is found in the mitochondrion intermembrane space. Its function is as follows. Component of the cytosolic iron-sulfur (Fe-S) protein assembly (CIA) machinery required for the maturation of extramitochondrial Fe-S proteins. Part of an electron transfer chain functioning in an early step of cytosolic Fe-S biogenesis, facilitating the de novo assembly of a [4Fe-4S] cluster on the scaffold complex CFD1-NBP35. Electrons are transferred to DRE2 from NADPH via the FAD- and FMN-containing protein TAH18. TAH18-DRE2 are also required for the assembly of the diferric tyrosyl radical cofactor of ribonucleotide reductase (RNR), probably by providing electrons for reduction during radical cofactor maturation in the catalytic small subunit RNR2. This Pyricularia oryzae (strain 70-15 / ATCC MYA-4617 / FGSC 8958) (Rice blast fungus) protein is Fe-S cluster assembly protein DRE2.